Here is a 20-residue protein sequence, read N- to C-terminus: LSLHEYMSMELLQEAGVSIP.

Positions 8 to 20 (SMELLQEAGVSIP) constitute an ATP-grasp domain.

It belongs to the succinate/malate CoA ligase beta subunit family. ATP-specific subunit beta subfamily. As to quaternary structure, heterodimer of an alpha and a beta subunit. The beta subunit determines specificity for ATP. Interacts with ALAS2.

The protein localises to the mitochondrion. It catalyses the reaction succinate + ATP + CoA = succinyl-CoA + ADP + phosphate. It participates in carbohydrate metabolism; tricarboxylic acid cycle; succinate from succinyl-CoA (ligase route): step 1/1. Its function is as follows. ATP-specific succinyl-CoA synthetase functions in the citric acid cycle (TCA), coupling the hydrolysis of succinyl-CoA to the synthesis of ATP and thus represents the only step of substrate-level phosphorylation in the TCA. The beta subunit provides nucleotide specificity of the enzyme and binds the substrate succinate, while the binding sites for coenzyme A and phosphate are found in the alpha subunit. This Canis lupus familiaris (Dog) protein is Succinate--CoA ligase [ADP-forming] subunit beta, mitochondrial.